The primary structure comprises 408 residues: GTPase Obg (408 aa).

Positions 1 to 159 constitute an Obg domain; the sequence is MKFVDEVSIR…RDLKMEMKVL (159 aa). Residues 127–150 are disordered; the sequence is NTRFKSSTNRAPRQTTPGKPGDQR. A compositionally biased stretch (polar residues) spans 129-143; that stretch reads RFKSSTNRAPRQTTP. In terms of domain architecture, OBG-type G spans 160-333; sequence ADVGLLGLPN…LSHDLMRYLE (174 aa). Residues 166–173, 191–195, 213–216, 283–286, and 314–316 each bind GTP; these read GLPNAGKS, FTTLV, DIPG, NKSD, and SAI. Mg(2+) contacts are provided by serine 173 and threonine 193. The interval 382–408 is disordered; the sequence is HDIGDDDGWDDDFEDDEDGPEIIYVRD. The segment covering 385–401 has biased composition (acidic residues); it reads GDDDGWDDDFEDDEDGP.

The protein belongs to the TRAFAC class OBG-HflX-like GTPase superfamily. OBG GTPase family. In terms of assembly, monomer. The cofactor is Mg(2+).

It localises to the cytoplasm. In terms of biological role, an essential GTPase which binds GTP, GDP and possibly (p)ppGpp with moderate affinity, with high nucleotide exchange rates and a fairly low GTP hydrolysis rate. Plays a role in control of the cell cycle, stress response, ribosome biogenesis and in those bacteria that undergo differentiation, in morphogenesis control. The polypeptide is GTPase Obg (Pseudomonas putida (strain GB-1)).